The following is a 462-amino-acid chain: GTPase Der (462 aa).

2 EngA-type G domains span residues 2–164 (KKIA…PKKE) and 195–366 (INVA…KNYS). GTP-binding positions include 8–15 (GKPNVGKS), 55–59 (DTGGI), 116–119 (NKID), 201–208 (GRVNVGKS), 248–252 (DTAGI), and 312–315 (NKWD). One can recognise a KH-like domain in the interval 367-451 (TWLPTGQLNR…PIILRPRKRG (85 aa)).

Belongs to the TRAFAC class TrmE-Era-EngA-EngB-Septin-like GTPase superfamily. EngA (Der) GTPase family. Associates with the 50S ribosomal subunit.

In terms of biological role, GTPase that plays an essential role in the late steps of ribosome biogenesis. The protein is GTPase Der of Nitratiruptor sp. (strain SB155-2).